The following is a 142-amino-acid chain: Hemoglobin subunit alpha-A (142 aa).

A Globin domain is found at 2 to 142; it reads VLSANDKTNV…VGNVLTAKYR (141 aa). Histidine 59 contributes to the O2 binding site. Histidine 88 is a heme b binding site.

This sequence belongs to the globin family. In terms of assembly, heterotetramer of two alpha chains and two beta chains. In terms of tissue distribution, red blood cells.

Involved in oxygen transport from the lung to the various peripheral tissues. The polypeptide is Hemoglobin subunit alpha-A (HBAA) (Aegypius monachus (Cinereous vulture)).